Consider the following 520-residue polypeptide: Trichothecene O-acetyltransferase TRI3 (520 aa).

The disordered stretch occupies residues 1–23; sequence MGSKLPELPKLSPEKHRWEKSNV. Residues 12 to 23 are compositionally biased toward basic and acidic residues; that stretch reads SPEKHRWEKSNV.

The protein belongs to the trichothecene O-acetyltransferase family.

It functions in the pathway sesquiterpene biosynthesis; trichothecene biosynthesis. Functionally, trichothecene O-acetyltransferase; part of the gene cluster that mediates the production of the antimicrobial trichothecene harzianum A (HA) that plays a role in Botrytis cinerea antagonistic activity and plant defense priming. The biosynthesis of harzianum A begins with the cyclization of farnesyl diphosphate to trichodiene and is catalyzed by the trichodiene synthase TRI5. Trichodiene undergoes a series of oxygenations catalyzed by the cytochrome P450 monooxygenase TRI4. TRI4 controls the addition of 3 oxygens at C-2, C-11, and the C-12, C-13-epoxide to form the intermediate isotrichodiol. Isotrichodiol then undergoes a non-enzymatic isomerization and cyclization to form 12,13-epoxytrichothec-9-ene (EPT) which is further converted to trichodermol by the cytochrome P450 monooxygenase TRI11 via C-4 hydroxylation. The last step of HA synthesis is esterification of an octatriendioyl moiety to the C-4 oxygen of trichodermol. The octatriendioyl moiety is probably produced by the polyketide synthase TRI17 and the esterification performed by the trichothecene O-acetyltransferase TRI3. This chain is Trichothecene O-acetyltransferase TRI3, found in Trichoderma arundinaceum.